The primary structure comprises 58 residues: Large ribosomal subunit protein bL32c (58 aa).

The segment covering 1–19 has biased composition (basic residues); the sequence is MAVPKKRKSKMKTRLRKAQ. The segment at 1-25 is disordered; the sequence is MAVPKKRKSKMKTRLRKAQWKSEAS.

The protein belongs to the bacterial ribosomal protein bL32 family.

It is found in the plastid. It localises to the chloroplast. The chain is Large ribosomal subunit protein bL32c (rpl32) from Chlorella vulgaris (Green alga).